Here is a 340-residue protein sequence, read N- to C-terminus: Ferrochelatase (340 aa).

Fe cation contacts are provided by histidine 189 and glutamate 292.

It belongs to the ferrochelatase family.

It localises to the cytoplasm. The catalysed reaction is heme b + 2 H(+) = protoporphyrin IX + Fe(2+). The protein operates within porphyrin-containing compound metabolism; protoheme biosynthesis; protoheme from protoporphyrin-IX: step 1/1. Its function is as follows. Catalyzes the ferrous insertion into protoporphyrin IX. The protein is Ferrochelatase of Pseudomonas aeruginosa (strain UCBPP-PA14).